We begin with the raw amino-acid sequence, 175 residues long: Peptide deformylase (175 aa).

Fe cation is bound by residues cysteine 96 and histidine 138. The active site involves glutamate 139. Residue histidine 142 coordinates Fe cation.

The protein belongs to the polypeptide deformylase family. The cofactor is Fe(2+).

It catalyses the reaction N-terminal N-formyl-L-methionyl-[peptide] + H2O = N-terminal L-methionyl-[peptide] + formate. Functionally, removes the formyl group from the N-terminal Met of newly synthesized proteins. Requires at least a dipeptide for an efficient rate of reaction. N-terminal L-methionine is a prerequisite for activity but the enzyme has broad specificity at other positions. The protein is Peptide deformylase of Rhodopseudomonas palustris (strain BisB5).